The following is a 337-amino-acid chain: Inositol 2-dehydrogenase (337 aa).

This sequence belongs to the Gfo/Idh/MocA family. As to quaternary structure, homotetramer.

It catalyses the reaction myo-inositol + NAD(+) = scyllo-inosose + NADH + H(+). In terms of biological role, involved in the oxidation of myo-inositol (MI) to 2-keto-myo-inositol (2KMI or 2-inosose). The polypeptide is Inositol 2-dehydrogenase (Burkholderia lata (strain ATCC 17760 / DSM 23089 / LMG 22485 / NCIMB 9086 / R18194 / 383)).